The chain runs to 472 residues: Coronin-6 (472 aa).

6 WD repeats span residues glutamine 23 to leucine 64, lysine 72 to isoleucine 111, glutamate 122 to valine 161, glutamate 165 to proline 204, valine 210 to proline 251, and glutamate 256 to isoleucine 296. A disordered region spans residues lysine 407–glutamine 433. Over residues arginine 420–glutamine 433 the composition is skewed to polar residues. The stretch at leucine 430–leucine 464 forms a coiled coil.

In Homo sapiens (Human), this protein is Coronin-6 (CORO6).